The following is a 270-amino-acid chain: Putative phosphoenolpyruvate synthase regulatory protein (270 aa).

150–157 provides a ligand contact to ADP; it reads GVSRCGKT.

The protein belongs to the pyruvate, phosphate/water dikinase regulatory protein family. PSRP subfamily.

The catalysed reaction is [pyruvate, water dikinase] + ADP = [pyruvate, water dikinase]-phosphate + AMP + H(+). It carries out the reaction [pyruvate, water dikinase]-phosphate + phosphate + H(+) = [pyruvate, water dikinase] + diphosphate. Its function is as follows. Bifunctional serine/threonine kinase and phosphorylase involved in the regulation of the phosphoenolpyruvate synthase (PEPS) by catalyzing its phosphorylation/dephosphorylation. The polypeptide is Putative phosphoenolpyruvate synthase regulatory protein (Shewanella woodyi (strain ATCC 51908 / MS32)).